A 194-amino-acid polypeptide reads, in one-letter code: Lipoprotein signal peptidase (194 aa).

2 helical membrane passes run 75–95 (TIFLITNMIIVCYLYYLMICS) and 97–117 (TIGSFAGYSFVIGGAIGNLID). Residues D126 and D144 contribute to the active site. Residues 135 to 155 (YSFPVFNLADCFITLGVIILM) form a helical membrane-spanning segment.

It belongs to the peptidase A8 family.

Its subcellular location is the cell inner membrane. It carries out the reaction Release of signal peptides from bacterial membrane prolipoproteins. Hydrolyzes -Xaa-Yaa-Zaa-|-(S,diacylglyceryl)Cys-, in which Xaa is hydrophobic (preferably Leu), and Yaa (Ala or Ser) and Zaa (Gly or Ala) have small, neutral side chains.. It participates in protein modification; lipoprotein biosynthesis (signal peptide cleavage). In terms of biological role, this protein specifically catalyzes the removal of signal peptides from prolipoproteins. The sequence is that of Lipoprotein signal peptidase from Rickettsia prowazekii (strain Madrid E).